We begin with the raw amino-acid sequence, 234 residues long: Leucyl/phenylalanyl-tRNA--protein transferase (234 aa).

The protein belongs to the L/F-transferase family.

The protein resides in the cytoplasm. It catalyses the reaction N-terminal L-lysyl-[protein] + L-leucyl-tRNA(Leu) = N-terminal L-leucyl-L-lysyl-[protein] + tRNA(Leu) + H(+). The catalysed reaction is N-terminal L-arginyl-[protein] + L-leucyl-tRNA(Leu) = N-terminal L-leucyl-L-arginyl-[protein] + tRNA(Leu) + H(+). The enzyme catalyses L-phenylalanyl-tRNA(Phe) + an N-terminal L-alpha-aminoacyl-[protein] = an N-terminal L-phenylalanyl-L-alpha-aminoacyl-[protein] + tRNA(Phe). Functions in the N-end rule pathway of protein degradation where it conjugates Leu, Phe and, less efficiently, Met from aminoacyl-tRNAs to the N-termini of proteins containing an N-terminal arginine or lysine. This chain is Leucyl/phenylalanyl-tRNA--protein transferase, found in Pectobacterium atrosepticum (strain SCRI 1043 / ATCC BAA-672) (Erwinia carotovora subsp. atroseptica).